Reading from the N-terminus, the 426-residue chain is MIAELVFVGTELLLGEILNTNAQYLSRQLAQLGVDVYHQVVVGDNAARLRAVLSQALSRSDLVIASGGLGPTDDDITREVAAEVTGRPLELDPQLLAQLEIWFARRGRRMAENNRRQCMVPRGARVLPNDRGTAPGLMIPADGDKVVILLPGPPGELRPMFEAHVAPYLAARSGGRPLRLVTRTLRFVGIGESALADGLRDLMATQTDPTIAPYAKVAEVHLRLATRAADEAEGYARIAPLEAEIRSRFGRFLYGSDEETLPQAVGRLLAERGMTLSTAESCTGGLVAKWITDVPGSSRYFGTGFVTYANEAKVSLLGVPEELLSAHGAVSEPVARAMAEGALQRSGADVAVAVSGIAGPDGGTPEKPVGTVCFALAGRGRQGGGPLPAGTWAETLWLHGDRDGVRERAAVHALAMVRRYLLGYLD.

This sequence belongs to the CinA family.

The chain is Putative competence-damage inducible protein from Symbiobacterium thermophilum (strain DSM 24528 / JCM 14929 / IAM 14863 / T).